Here is a 125-residue protein sequence, read N- to C-terminus: Prefoldin subunit beta (125 aa).

This sequence belongs to the prefoldin subunit beta family. As to quaternary structure, heterohexamer of two alpha and four beta subunits.

It is found in the cytoplasm. Functionally, molecular chaperone capable of stabilizing a range of proteins. Seems to fulfill an ATP-independent, HSP70-like function in archaeal de novo protein folding. In Sulfurisphaera tokodaii (strain DSM 16993 / JCM 10545 / NBRC 100140 / 7) (Sulfolobus tokodaii), this protein is Prefoldin subunit beta (pfdB).